A 360-amino-acid polypeptide reads, in one-letter code: Peptide chain release factor 1 (360 aa).

Glutamine 235 carries the post-translational modification N5-methylglutamine. A compositionally biased stretch (basic and acidic residues) spans 285 to 308 (KRQEAEASERRNLLGSGDRSDRNR). The segment at 285 to 313 (KRQEAEASERRNLLGSGDRSDRNRTYNFP) is disordered.

It belongs to the prokaryotic/mitochondrial release factor family. Post-translationally, methylated by PrmC. Methylation increases the termination efficiency of RF1.

The protein localises to the cytoplasm. In terms of biological role, peptide chain release factor 1 directs the termination of translation in response to the peptide chain termination codons UAG and UAA. The chain is Peptide chain release factor 1 from Photorhabdus laumondii subsp. laumondii (strain DSM 15139 / CIP 105565 / TT01) (Photorhabdus luminescens subsp. laumondii).